A 190-amino-acid polypeptide reads, in one-letter code: Vascular endothelial growth factor A (190 aa).

Residues 1-26 (MNFLLSWVHWTLALLLYLHHAKWSQA) form the signal peptide. 3 disulfide bridges follow: Cys-51/Cys-93, Cys-82/Cys-127, and Cys-86/Cys-129. N-linked (GlcNAc...) asparagine glycosylation occurs at Asn-100.

Belongs to the PDGF/VEGF growth factor family. Homodimer; disulfide-linked. Also found as heterodimer with PGF. Interacts with NRP1. Interacts with isoform 2 of BSG. Interacts with CD82; this interaction inhibits VEGFA-mediated signaling pathway.

It localises to the secreted. Its function is as follows. Growth factor active in angiogenesis, vasculogenesis and endothelial cell growth. Induces endothelial cell proliferation, promotes cell migration, inhibits apoptosis and induces permeabilization of blood vessels. Binds to the FLT1/VEGFR1 and KDR/VEGFR2 receptors, heparan sulfate and heparin. Binding to NRP1 receptor initiates a signaling pathway needed for motor neuron axon guidance and cell body migration, including for the caudal migration of facial motor neurons from rhombomere 4 to rhombomere 6 during embryonic development. Also binds the DEAR/FBXW7-AS1 receptor. This Mesocricetus auratus (Golden hamster) protein is Vascular endothelial growth factor A (VEGFA).